The sequence spans 1058 residues: Isoleucine--tRNA ligase (1058 aa).

Residues 48-58 (PYTTGHIHLGT) carry the 'HIGH' region motif. A 'KMSKS' region motif is present at residues 596-600 (KMSKS). Residue lysine 599 coordinates ATP.

It belongs to the class-I aminoacyl-tRNA synthetase family. IleS type 2 subfamily. Monomer. It depends on Zn(2+) as a cofactor.

It is found in the cytoplasm. The enzyme catalyses tRNA(Ile) + L-isoleucine + ATP = L-isoleucyl-tRNA(Ile) + AMP + diphosphate. Functionally, catalyzes the attachment of isoleucine to tRNA(Ile). As IleRS can inadvertently accommodate and process structurally similar amino acids such as valine, to avoid such errors it has two additional distinct tRNA(Ile)-dependent editing activities. One activity is designated as 'pretransfer' editing and involves the hydrolysis of activated Val-AMP. The other activity is designated 'posttransfer' editing and involves deacylation of mischarged Val-tRNA(Ile). The sequence is that of Isoleucine--tRNA ligase from Methanosarcina mazei (strain ATCC BAA-159 / DSM 3647 / Goe1 / Go1 / JCM 11833 / OCM 88) (Methanosarcina frisia).